The sequence spans 882 residues: Chondroitin sulfate synthase 3 (882 aa).

Over 1 to 7 the chain is Cytoplasmic; it reads MAVRSRR. A helical; Signal-anchor for type II membrane protein membrane pass occupies residues 8–28; it reads PWMSVALGLVLGFTAASWLIA. Residues 29-882 are Lumenal-facing; the sequence is PRVAELSERK…LGVRYNRTLS (854 aa). The segment at 46–167 is disordered; the sequence is SYYGRSAAGP…GDGGAAAPSA (122 aa). Low complexity-rich tracts occupy residues 59–69 and 120–131; these read AQQPLPQPQSR and GATGLPGAPAAE. Asn155, Asn279, and Asn710 each carry an N-linked (GlcNAc...) asparagine glycan. Residues Asp720 and His834 each coordinate a divalent metal cation. Asn878 carries N-linked (GlcNAc...) asparagine glycosylation.

Belongs to the chondroitin N-acetylgalactosaminyltransferase family. The cofactor is Co(2+). It depends on Mn(2+) as a cofactor. Cd(2+) serves as cofactor. In terms of tissue distribution, detected at low levels in brain, cerebral cortex, uterus and small intestine.

The protein localises to the golgi apparatus. It localises to the golgi stack membrane. The catalysed reaction is 3-O-(beta-D-GlcA-(1-&gt;3)-beta-D-GalNAc-(1-&gt;4)-beta-D-GlcA-(1-&gt;3)-beta-D-Gal-(1-&gt;3)-beta-D-Gal-(1-&gt;4)-beta-D-Xyl)-L-seryl-[protein] + UDP-N-acetyl-alpha-D-galactosamine = 3-O-(beta-D-GalNAc-(1-&gt;4)-beta-D-GlcA-(1-&gt;3)-beta-D-GalNAc-(1-&gt;4)-beta-D-GlcA-(1-&gt;3)-beta-D-Gal-(1-&gt;3)-beta-D-Gal-(1-&gt;4)-beta-D-Xyl)-L-seryl-[protein] + UDP + H(+). It carries out the reaction 3-O-{beta-D-GlcA-(1-&gt;3)-[beta-D-GalNAc-(1-&gt;4)-beta-D-GlcA-(1-&gt;3)](n)-beta-D-GalNAc-(1-&gt;4)-beta-D-GlcA-(1-&gt;3)-beta-D-Gal-(1-&gt;3)-beta-D-Gal-(1-&gt;4)-beta-D-Xyl}-L-seryl-[protein] + UDP-N-acetyl-alpha-D-galactosamine = 3-O-{[beta-D-GalNAc-(1-&gt;4)-beta-D-GlcA-(1-&gt;3)](n+1)-beta-D-GalNAc-(1-&gt;4)-beta-D-GlcA-(1-&gt;3)-beta-D-Gal-(1-&gt;3)-beta-D-Gal-(1-&gt;4)-beta-D-Xyl}-L-seryl-[protein] + UDP + H(+). The enzyme catalyses 3-O-(beta-D-GalNAc-(1-&gt;4)-beta-D-GlcA-(1-&gt;3)-beta-D-Gal-(1-&gt;3)-beta-D-Gal-(1-&gt;4)-beta-D-Xyl)-L-seryl-[protein] + UDP-alpha-D-glucuronate = 3-O-(beta-D-GlcA-(1-&gt;3)-beta-D-GalNAc-(1-&gt;4)-beta-D-GlcA-(1-&gt;3)-beta-D-Gal-(1-&gt;3)-beta-D-Gal-(1-&gt;4)-beta-D-Xyl)-L-seryl-[protein] + UDP + H(+). It catalyses the reaction 3-O-{[beta-D-GalNAc-(1-&gt;4)-beta-D-GlcA-(1-&gt;3)](n)-beta-D-GalNAc-(1-&gt;4)-beta-D-GlcA-(1-&gt;3)-beta-D-Gal-(1-&gt;3)-beta-D-Gal-(1-&gt;4)-beta-D-Xyl}-L-seryl-[protein] + UDP-alpha-D-glucuronate = 3-O-{beta-D-GlcA-(1-&gt;3)-[beta-D-GalNAc-(1-&gt;4)-beta-D-GlcA-(1-&gt;3)](n)-beta-D-GalNAc-(1-&gt;4)-beta-D-GlcA-(1-&gt;3)-beta-D-Gal-(1-&gt;3)-beta-D-Gal-(1-&gt;4)-beta-D-Xyl}-L-seryl-[protein] + UDP + H(+). Functionally, has both beta-1,3-glucuronic acid and beta-1,4-N-acetylgalactosamine transferase activity. Transfers glucuronic acid (GlcUA) from UDP-GlcUA and N-acetylgalactosamine (GalNAc) from UDP-GalNAc to the non-reducing end of the elongating chondroitin polymer. Specific activity is much reduced compared to CHSY1. This Homo sapiens (Human) protein is Chondroitin sulfate synthase 3 (CHSY3).